Reading from the N-terminus, the 592-residue chain is Protein kinase C zeta type (592 aa).

One can recognise a PB1 domain in the interval 15–98 (RVRLKAHYGG…EVLIIHVFPS (84 aa)). The interaction with SQSTM1 stretch occupies residues 79-145 (AFRLVCQGRD…KRFNRGAYCG (67 aa)). The Phorbol-ester/DAG-type zinc-finger motif lies at 130-180 (GHLFQAKRFNRGAYCGQCSERIWGLSRQGYRCINCKLLVHKRCHVLVPLTC). The region spanning 252 to 518 (FDLIRVIGRG…FSDIKSHAFF (267 aa)) is the Protein kinase domain. ATP-binding positions include 258–266 (IGRGSYAKV) and K281. Residue D376 is the Proton acceptor of the active site. At T410 the chain carries Phosphothreonine; by PDPK1 and PI3K. Positions 519–590 (RSIDWDLLEK…INPLLLSAEE (72 aa)) constitute an AGC-kinase C-terminal domain. T560 is subject to Phosphothreonine. The residue at position 591 (S591) is a Phosphoserine.

Belongs to the protein kinase superfamily. AGC Ser/Thr protein kinase family. PKC subfamily. In terms of assembly, interacts directly with SQSTM1. Forms a ternary complex with SQSTM1 and KCNAB2. Forms another ternary complex with SQSTM1 and GABRR3. Forms a complex with SQSTM1 and MAP2K5. Interacts with PARD6A, PARD6B and PARD6G. Part of a complex with PARD3, PARD6A or PARD6B or PARD6G and CDC42 or RAC1. Interacts with ADAP1/CENTA1. Interacts (via the protein kinase domain) with WWC1. Forms a tripartite complex with WWC1 and DDR1, but predominantly in the absence of collagen. Interacts with PDPK1 (via N-terminal region). Interacts with WDFY2 (via WD repeats 1-3). Interacts with VAMP2. Forms a complex with WDFY2 and VAMP2. Interacts with APPL1. Interacts with WWC1, WWC2 and WWC3. CDH5 is required for its phosphorylation at Thr-410. Phosphorylated by protein kinase PDPK1; phosphorylation is inhibited by the apoptotic C-terminal cleavage product of PKN2. Phosphorylation at Thr-410 by PI3K activates the kinase. Isoform 1: In brain, highly expressed in cerebellar granule neurons and cerebellar astrocytes (at protein level). Expressed at low levels in testes, lung and kidney. Isoform 2: Specifically expressed in brain where it localizes to cerebellar granule neurons (at protein level).

Its subcellular location is the cytoplasm. It localises to the endosome. The protein resides in the cell junction. It is found in the membrane. The catalysed reaction is L-seryl-[protein] + ATP = O-phospho-L-seryl-[protein] + ADP + H(+). It catalyses the reaction L-threonyl-[protein] + ATP = O-phospho-L-threonyl-[protein] + ADP + H(+). Atypical PKCs (PRKCI and PRKCZ) exhibit an elevated basal enzymatic activity (that may be due to the interaction with SMG1 or SQSTM1) and are not regulated by diacylglycerol, phosphatidylserine, phorbol esters or calcium ions. Two specific sites, Thr-410 (activation loop of the kinase domain) and Thr-560 (turn motif), need to be phosphorylated for its full activation. Phosphatidylinositol 3,4,5-trisphosphate might be a physiological activator. Isoform 2: Constitutively active. Functionally, calcium- and diacylglycerol-independent serine/threonine-protein kinase that functions in phosphatidylinositol 3-kinase (PI3K) pathway and mitogen-activated protein (MAP) kinase cascade, and is involved in NF-kappa-B activation, mitogenic signaling, cell proliferation, cell polarity, inflammatory response and maintenance of long-term potentiation (LTP). Upon lipopolysaccharide (LPS) treatment in macrophages, or following mitogenic stimuli, functions downstream of PI3K to activate MAP2K1/MEK1-MAPK1/ERK2 signaling cascade independently of RAF1 activation. Required for insulin-dependent activation of AKT3, but may function as an adapter rather than a direct activator. Upon insulin treatment may act as a downstream effector of PI3K and contribute to the activation of translocation of the glucose transporter SLC2A4/GLUT4 and subsequent glucose transport in adipocytes. In EGF-induced cells, binds and activates MAP2K5/MEK5-MAPK7/ERK5 independently of its kinase activity and can activate JUN promoter through MEF2C. Through binding with SQSTM1/p62, functions in interleukin-1 signaling and activation of NF-kappa-B with the specific adapters RIPK1 and TRAF6. Participates in TNF-dependent transactivation of NF-kappa-B by phosphorylating and activating IKBKB kinase, which in turn leads to the degradation of NF-kappa-B inhibitors. In migrating astrocytes, forms a cytoplasmic complex with PARD6A and is recruited by CDC42 to function in the establishment of cell polarity along with the microtubule motor and dynein. In association with FEZ1, stimulates neuronal differentiation in PC12 cells. In the inflammatory response, is required for the T-helper 2 (Th2) differentiation process, including interleukin production, efficient activation of JAK1 and the subsequent phosphorylation and nuclear translocation of STAT6. May be involved in development of allergic airway inflammation (asthma), a process dependent on Th2 immune response. In the NF-kappa-B-mediated inflammatory response, can relieve SETD6-dependent repression of NF-kappa-B target genes by phosphorylating the RELA subunit at 'Ser-311'. Phosphorylates VAMP2 in vitro. Phosphorylates and activates LRRK1, which phosphorylates RAB proteins involved in intracellular trafficking. Its function is as follows. Involved in late synaptic long term potentiation phase in CA1 hippocampal cells and long term memory maintenance. This is Protein kinase C zeta type (Prkcz) from Mus musculus (Mouse).